We begin with the raw amino-acid sequence, 329 residues long: uncharacterized protein (329 aa).

A disordered region spans residues 1 to 20 (MGESTTQPAGGAAVDDETRS).

This is an uncharacterized protein from Mycobacterium tuberculosis (strain CDC 1551 / Oshkosh).